Here is a 541-residue protein sequence, read N- to C-terminus: Glucose-6-phosphate isomerase (541 aa).

Glu-346 functions as the Proton donor in the catalytic mechanism. Catalysis depends on residues His-377 and Lys-506.

The protein belongs to the GPI family.

The protein localises to the cytoplasm. It catalyses the reaction alpha-D-glucose 6-phosphate = beta-D-fructose 6-phosphate. It functions in the pathway carbohydrate biosynthesis; gluconeogenesis. It participates in carbohydrate degradation; glycolysis; D-glyceraldehyde 3-phosphate and glycerone phosphate from D-glucose: step 2/4. Catalyzes the reversible isomerization of glucose-6-phosphate to fructose-6-phosphate. This chain is Glucose-6-phosphate isomerase, found in Rhizobium johnstonii (strain DSM 114642 / LMG 32736 / 3841) (Rhizobium leguminosarum bv. viciae).